The primary structure comprises 179 residues: MSEKDFVQVAKLGKTVGLKGYVKLHNLSDFSSQFKKDATFFIKNTKEMLKIKHYNASNSTVLFENYEDIEKAKELINLILFQSIEKSRQTCKLKKDEFFYFDILECEVFEEDKRLGKVIDILETGASYLFEIQSDEKWVEKKYPKIFFIPYLDKFVKNIDIEKRQIFCTQDAFLILENS.

Positions 95 to 174 (KDEFFYFDIL…QIFCTQDAFL (80 aa)) constitute a PRC barrel domain.

The protein belongs to the RimM family. As to quaternary structure, binds ribosomal protein uS19.

It is found in the cytoplasm. In terms of biological role, an accessory protein needed during the final step in the assembly of 30S ribosomal subunit, possibly for assembly of the head region. Essential for efficient processing of 16S rRNA. May be needed both before and after RbfA during the maturation of 16S rRNA. It has affinity for free ribosomal 30S subunits but not for 70S ribosomes. This is Ribosome maturation factor RimM from Campylobacter jejuni subsp. jejuni serotype O:6 (strain 81116 / NCTC 11828).